Consider the following 137-residue polypeptide: Large ribosomal subunit protein bL21 (137 aa).

Residues 1-26 are disordered; the sequence is MADTKTATPATDAEEATATPPAAAPS.

This sequence belongs to the bacterial ribosomal protein bL21 family. Part of the 50S ribosomal subunit. Contacts protein L20.

Its function is as follows. This protein binds to 23S rRNA in the presence of protein L20. This Parasynechococcus marenigrum (strain WH8102) protein is Large ribosomal subunit protein bL21.